The primary structure comprises 372 residues: DNA primase small subunit PriS (372 aa).

Catalysis depends on residues Asp95, Asp97, and Asp280.

The protein belongs to the eukaryotic-type primase small subunit family. As to quaternary structure, heterodimer of a small subunit (PriS) and a large subunit (PriL). Requires Mg(2+) as cofactor. Mn(2+) serves as cofactor.

Functionally, catalytic subunit of DNA primase, an RNA polymerase that catalyzes the synthesis of short RNA molecules used as primers for DNA polymerase during DNA replication. The small subunit contains the primase catalytic core and has DNA synthesis activity on its own. Binding to the large subunit stabilizes and modulates the activity, increasing the rate of DNA synthesis while decreasing the length of the DNA fragments, and conferring RNA synthesis capability. The DNA polymerase activity may enable DNA primase to also catalyze primer extension after primer synthesis. May also play a role in DNA repair. The sequence is that of DNA primase small subunit PriS from Cenarchaeum symbiosum (strain A).